Consider the following 56-residue polypeptide: Large ribosomal subunit protein bL33 (56 aa).

This sequence belongs to the bacterial ribosomal protein bL33 family.

This chain is Large ribosomal subunit protein bL33 (rpmG), found in Treponema pallidum (strain Nichols).